Here is a 608-residue protein sequence, read N- to C-terminus: Bifunctional dihydrofolate reductase-thymidylate synthase (608 aa).

Positions 10-228 constitute a DHFR domain; the sequence is DIYAICACCK…TTLDFIIYKK (219 aa). Residue 14–15 participates in substrate binding; the sequence is IC. A16 lines the NADP(+) pocket. Residue V31 participates in substrate binding. Position 39–45 (39–45) interacts with NADP(+); sequence GLGNKGV. Residues D54 and N108 each coordinate substrate. Residues 106–108, 128–130, and N144 contribute to the NADP(+) site; these read RTN and SRT. Substrate-binding residues include I164, Y170, and T185. NADP(+) is bound at residue 165–172; that stretch reads GGSVVYQE. The segment at 322-608 is thymidylate synthase; sequence YHPEYQYLNI…HEKISMDMAA (287 aa). R345 provides a ligand contact to dUMP. C490 is a catalytic residue. DUMP is bound by residues H491, 509–513, N521, and 551–553; these read QRSCD and HVY.

It in the N-terminal section; belongs to the dihydrofolate reductase family. This sequence in the C-terminal section; belongs to the thymidylate synthase family. Homodimer.

It carries out the reaction (6S)-5,6,7,8-tetrahydrofolate + NADP(+) = 7,8-dihydrofolate + NADPH + H(+). It catalyses the reaction dUMP + (6R)-5,10-methylene-5,6,7,8-tetrahydrofolate = 7,8-dihydrofolate + dTMP. The protein operates within cofactor biosynthesis; tetrahydrofolate biosynthesis; 5,6,7,8-tetrahydrofolate from 7,8-dihydrofolate: step 1/1. Functionally, bifunctional enzyme. Involved in de novo dTMP biosynthesis. Key enzyme in folate metabolism. Catalyzes an essential reaction for de novo glycine and purine synthesis, DNA precursor synthesis, and for the conversion of dUMP to dTMP. This is Bifunctional dihydrofolate reductase-thymidylate synthase from Plasmodium falciparum (isolate K1 / Thailand).